Reading from the N-terminus, the 353-residue chain is Photosystem II protein D1 (353 aa).

At Thr2 the chain carries N-acetylthreonine. The residue at position 2 (Thr2) is a Phosphothreonine. The next 3 helical transmembrane spans lie at 29–46, 118–133, and 142–156; these read YIGW…TATS, HFLL…EWEL, and WIAV…AATA. Chlorophyll a is bound at residue His118. Tyr126 lines the pheophytin a pocket. [CaMn4O5] cluster is bound by residues Asp170 and Glu189. A helical membrane pass occupies residues 197-218; the sequence is FHMLGVAGVFGGSLFSAMHGSL. Residue His198 participates in chlorophyll a binding. A quinone-binding positions include His215 and 264 to 265; that span reads SF. His215 contributes to the Fe cation binding site. His272 lines the Fe cation pocket. The chain crosses the membrane as a helical span at residues 274-288; sequence FLAAWPVVGIWFTAL. [CaMn4O5] cluster contacts are provided by His332, Glu333, Asp342, and Ala344. Positions 345–353 are excised as a propeptide; the sequence is AVEAPAVNG.

The protein belongs to the reaction center PufL/M/PsbA/D family. PSII is composed of 1 copy each of membrane proteins PsbA, PsbB, PsbC, PsbD, PsbE, PsbF, PsbH, PsbI, PsbJ, PsbK, PsbL, PsbM, PsbT, PsbX, PsbY, PsbZ, Psb30/Ycf12, at least 3 peripheral proteins of the oxygen-evolving complex and a large number of cofactors. It forms dimeric complexes. Requires The D1/D2 heterodimer binds P680, chlorophylls that are the primary electron donor of PSII, and subsequent electron acceptors. It shares a non-heme iron and each subunit binds pheophytin, quinone, additional chlorophylls, carotenoids and lipids. D1 provides most of the ligands for the Mn4-Ca-O5 cluster of the oxygen-evolving complex (OEC). There is also a Cl(-1) ion associated with D1 and D2, which is required for oxygen evolution. The PSII complex binds additional chlorophylls, carotenoids and specific lipids. as cofactor. Tyr-161 forms a radical intermediate that is referred to as redox-active TyrZ, YZ or Y-Z. Post-translationally, C-terminally processed by CTPA; processing is essential to allow assembly of the oxygen-evolving complex and thus photosynthetic growth.

The protein resides in the plastid. Its subcellular location is the chloroplast thylakoid membrane. The catalysed reaction is 2 a plastoquinone + 4 hnu + 2 H2O = 2 a plastoquinol + O2. Functionally, photosystem II (PSII) is a light-driven water:plastoquinone oxidoreductase that uses light energy to abstract electrons from H(2)O, generating O(2) and a proton gradient subsequently used for ATP formation. It consists of a core antenna complex that captures photons, and an electron transfer chain that converts photonic excitation into a charge separation. The D1/D2 (PsbA/PsbD) reaction center heterodimer binds P680, the primary electron donor of PSII as well as several subsequent electron acceptors. This chain is Photosystem II protein D1, found in Conocephalum conicum (Snakeskin liverwort).